Here is a 557-residue protein sequence, read N- to C-terminus: Formate--tetrahydrofolate ligase (557 aa).

Position 65 to 72 (Thr-65 to Thr-72) interacts with ATP.

The protein belongs to the formate--tetrahydrofolate ligase family. As to quaternary structure, homotetramer.

It carries out the reaction (6S)-5,6,7,8-tetrahydrofolate + formate + ATP = (6R)-10-formyltetrahydrofolate + ADP + phosphate. It functions in the pathway one-carbon metabolism; tetrahydrofolate interconversion. The sequence is that of Formate--tetrahydrofolate ligase (fhs) from Methylorubrum extorquens (strain ATCC 14718 / DSM 1338 / JCM 2805 / NCIMB 9133 / AM1) (Methylobacterium extorquens).